The sequence spans 338 residues: Glyceraldehyde-3-phosphate dehydrogenase (338 aa).

NAD(+) is bound by residues 11–12 (TI) and glycine 111. 140–142 (SCN) serves as a coordination point for D-glyceraldehyde 3-phosphate. The Nucleophile role is filled by cysteine 141. Residue arginine 169 participates in NAD(+) binding. A disordered region spans residues 170-195 (GSDPSEVKKGPINSIVPNPPKVPSHH). 195–196 (HG) provides a ligand contact to D-glyceraldehyde 3-phosphate. Glutamine 302 serves as a coordination point for NAD(+).

The protein belongs to the glyceraldehyde-3-phosphate dehydrogenase family. Homotetramer.

It localises to the cytoplasm. It carries out the reaction D-glyceraldehyde 3-phosphate + phosphate + NADP(+) = (2R)-3-phospho-glyceroyl phosphate + NADPH + H(+). The catalysed reaction is D-glyceraldehyde 3-phosphate + phosphate + NAD(+) = (2R)-3-phospho-glyceroyl phosphate + NADH + H(+). The protein operates within carbohydrate degradation; glycolysis; pyruvate from D-glyceraldehyde 3-phosphate: step 1/5. The polypeptide is Glyceraldehyde-3-phosphate dehydrogenase (Methanobrevibacter smithii (strain ATCC 35061 / DSM 861 / OCM 144 / PS)).